The chain runs to 227 residues: 7-cyano-7-deazaguanine synthase (227 aa).

7-17 (VSGGMDSLVAT) is a binding site for ATP. Zn(2+) is bound by residues C187, C195, C198, and C201.

The protein belongs to the QueC family. Zn(2+) serves as cofactor.

It catalyses the reaction 7-carboxy-7-deazaguanine + NH4(+) + ATP = 7-cyano-7-deazaguanine + ADP + phosphate + H2O + H(+). Its pathway is purine metabolism; 7-cyano-7-deazaguanine biosynthesis. Catalyzes the ATP-dependent conversion of 7-carboxy-7-deazaguanine (CDG) to 7-cyano-7-deazaguanine (preQ(0)). This is 7-cyano-7-deazaguanine synthase from Chlorobaculum tepidum (strain ATCC 49652 / DSM 12025 / NBRC 103806 / TLS) (Chlorobium tepidum).